The chain runs to 231 residues: Cuticle protein LPCP-23 (231 aa).

The first 17 residues, 1 to 17 (MAFKFVVFAAALAYANA), serve as a signal peptide directing secretion. 2 repeat units span residues 130–133 (AAPV) and 199–202 (AAPV).

In terms of biological role, component of the cuticle of Tenebrio molitor. The sequence is that of Cuticle protein LPCP-23 (LPCP-23) from Tenebrio molitor (Yellow mealworm beetle).